A 252-amino-acid chain; its full sequence is 3-dehydroquinate dehydratase (252 aa).

3-dehydroquinate is bound by residues Glu47–Arg49 and Arg83. His144 acts as the Proton donor/acceptor in catalysis. Lys171 acts as the Schiff-base intermediate with substrate in catalysis. The 3-dehydroquinate site is built by Arg213, Ser232, and Gln236.

It belongs to the type-I 3-dehydroquinase family. In terms of assembly, homodimer.

The enzyme catalyses 3-dehydroquinate = 3-dehydroshikimate + H2O. It functions in the pathway metabolic intermediate biosynthesis; chorismate biosynthesis; chorismate from D-erythrose 4-phosphate and phosphoenolpyruvate: step 3/7. Its function is as follows. Involved in the third step of the chorismate pathway, which leads to the biosynthesis of aromatic amino acids. Catalyzes the cis-dehydration of 3-dehydroquinate (DHQ) and introduces the first double bond of the aromatic ring to yield 3-dehydroshikimate. This chain is 3-dehydroquinate dehydratase, found in Lactiplantibacillus plantarum (strain ATCC BAA-793 / NCIMB 8826 / WCFS1) (Lactobacillus plantarum).